A 503-amino-acid chain; its full sequence is Aspartyl/glutamyl-tRNA(Asn/Gln) amidotransferase subunit B (503 aa).

It belongs to the GatB/GatE family. GatB subfamily. As to quaternary structure, heterotrimer of A, B and C subunits.

The catalysed reaction is L-glutamyl-tRNA(Gln) + L-glutamine + ATP + H2O = L-glutaminyl-tRNA(Gln) + L-glutamate + ADP + phosphate + H(+). It carries out the reaction L-aspartyl-tRNA(Asn) + L-glutamine + ATP + H2O = L-asparaginyl-tRNA(Asn) + L-glutamate + ADP + phosphate + 2 H(+). Allows the formation of correctly charged Asn-tRNA(Asn) or Gln-tRNA(Gln) through the transamidation of misacylated Asp-tRNA(Asn) or Glu-tRNA(Gln) in organisms which lack either or both of asparaginyl-tRNA or glutaminyl-tRNA synthetases. The reaction takes place in the presence of glutamine and ATP through an activated phospho-Asp-tRNA(Asn) or phospho-Glu-tRNA(Gln). This chain is Aspartyl/glutamyl-tRNA(Asn/Gln) amidotransferase subunit B, found in Rhodococcus erythropolis (strain PR4 / NBRC 100887).